The chain runs to 311 residues: tRNA dimethylallyltransferase (311 aa).

Residue Gly-13–Thr-20 participates in ATP binding. Residue Thr-15–Thr-20 coordinates substrate. Interaction with substrate tRNA regions lie at residues Asp-38–Gln-41 and Gln-166–Arg-170.

It belongs to the IPP transferase family. As to quaternary structure, monomer. It depends on Mg(2+) as a cofactor.

It carries out the reaction adenosine(37) in tRNA + dimethylallyl diphosphate = N(6)-dimethylallyladenosine(37) in tRNA + diphosphate. Catalyzes the transfer of a dimethylallyl group onto the adenine at position 37 in tRNAs that read codons beginning with uridine, leading to the formation of N6-(dimethylallyl)adenosine (i(6)A). The polypeptide is tRNA dimethylallyltransferase (Staphylococcus aureus (strain Mu3 / ATCC 700698)).